A 178-amino-acid polypeptide reads, in one-letter code: Cytochrome b6-f complex iron-sulfur subunit (178 aa).

The chain crosses the membrane as a helical span at residues 20–42 (LLTFGTATGVALGALYPVANYFM). Residues 65–161 (KTGWLATHQA…VDIEDDAVLV (97 aa)) enclose the Rieske domain. 4 residues coordinate [2Fe-2S] cluster: C107, H109, C125, and H128. A disulfide bond links C112 and C127.

The protein belongs to the Rieske iron-sulfur protein family. In terms of assembly, the 4 large subunits of the cytochrome b6-f complex are cytochrome b6, subunit IV (17 kDa polypeptide, PetD), cytochrome f and the Rieske protein, while the 4 small subunits are PetG, PetL, PetM and PetN. The complex functions as a dimer. It depends on [2Fe-2S] cluster as a cofactor.

The protein resides in the cellular thylakoid membrane. It carries out the reaction 2 oxidized [plastocyanin] + a plastoquinol + 2 H(+)(in) = 2 reduced [plastocyanin] + a plastoquinone + 4 H(+)(out). Component of the cytochrome b6-f complex, which mediates electron transfer between photosystem II (PSII) and photosystem I (PSI), cyclic electron flow around PSI, and state transitions. The protein is Cytochrome b6-f complex iron-sulfur subunit of Prochlorococcus marinus (strain MIT 9301).